The chain runs to 296 residues: NAD kinase (296 aa).

The Proton acceptor role is filled by aspartate 72. NAD(+) is bound by residues 72 to 73 (DG), 146 to 147 (ND), arginine 157, lysine 174, aspartate 176, 187 to 192 (TAYALS), and glutamine 247.

The protein belongs to the NAD kinase family. The cofactor is a divalent metal cation.

The protein localises to the cytoplasm. The catalysed reaction is NAD(+) + ATP = ADP + NADP(+) + H(+). Its function is as follows. Involved in the regulation of the intracellular balance of NAD and NADP, and is a key enzyme in the biosynthesis of NADP. Catalyzes specifically the phosphorylation on 2'-hydroxyl of the adenosine moiety of NAD to yield NADP. This is NAD kinase from Pseudomonas syringae pv. syringae (strain B728a).